A 298-amino-acid chain; its full sequence is Probable tRNA(His) guanylyltransferase (298 aa).

3 residues coordinate Mg(2+): D58, G59, and D105. Residues 58–63 and 104–105 contribute to the GTP site; these read DGRNFH and SD.

The protein belongs to the tRNA(His) guanylyltransferase family. In terms of assembly, homotetramer. Interacts with MFN1 and MFN2; functions as a guanyl-nucleotide exchange factor/GEF for MFN2 and also probably MFN1. Mg(2+) is required as a cofactor. As to expression, expressed in many tissues.

It is found in the cytoplasm. Its subcellular location is the mitochondrion outer membrane. It carries out the reaction a 5'-end ribonucleotide-tRNA(His) + GTP + ATP + H2O = a 5'-end phospho-guanosine-ribonucleotide-tRNA(His) + AMP + 2 diphosphate + H(+). Its function is as follows. Adds a GMP to the 5'-end of tRNA(His) after transcription and RNase P cleavage. This step is essential for proper recognition of the tRNA and for the fidelity of protein synthesis. Also functions as a guanyl-nucleotide exchange factor/GEF for the MFN1 and MFN2 mitofusins thereby regulating mitochondrial fusion. By regulating both mitochondrial dynamics and bioenergetic function, it contributes to cell survival following oxidative stress. The protein is Probable tRNA(His) guanylyltransferase (THG1L) of Homo sapiens (Human).